We begin with the raw amino-acid sequence, 143 residues long: Hemoglobin subunit alpha (143 aa).

At serine 1 the chain carries N-acetylserine. The region spanning 1–143 (SLSATDKARV…LALALSEKYR (143 aa)) is the Globin domain. An O2-binding site is contributed by histidine 60. Histidine 89 provides a ligand contact to heme b.

This sequence belongs to the globin family. In terms of assembly, heterotetramer of two alpha chains and two beta chains. As to expression, red blood cells.

Involved in oxygen transport from gills to the various peripheral tissues. In Leiostomus xanthurus (Spot), this protein is Hemoglobin subunit alpha (hba).